A 614-amino-acid chain; its full sequence is Zinc metalloproteinase-disintegrin-like protein F1 (614 aa).

The N-terminal stretch at 1 to 20 is a signal peptide; sequence MLQVLLVTICLAVFPYQGSS. A propeptide spanning residues 21-192 is cleaved from the precursor; the sequence is IILESGNVND…IKASQFILTP (172 aa). A Cys-switch; controls maturation motif is present at residues 167 to 173; it reads PKKCGVT. Glu-193 carries the post-translational modification Pyrrolidone carboxylic acid (Glu). One can recognise a Peptidase M12B domain in the interval 202 to 398; sequence KYIKLAIVVD…HTPRCILNEP (197 aa). The N-linked (GlcNAc...) asparagine glycan is linked to Asn-221. Intrachain disulfides connect Cys-313–Cys-393, Cys-353–Cys-377, and Cys-355–Cys-360. His-338 lines the Zn(2+) pocket. The Metal-binding motif lies at 338–349; that stretch reads HELGHNLGINHD. Glu-339 acts as the Proton acceptor in catalysis. The Zn(2+) site is built by His-342 and His-348. A Disintegrin domain is found at 406–492; sequence PAVCGNYVVE…ECPMDHIQKN (87 aa). Ca(2+) contacts are provided by Val-408, Asn-411, Glu-415, Glu-418, and Asp-421. Disulfide bonds link Cys-409–Cys-438, Cys-420–Cys-433, Cys-422–Cys-428, Cys-432–Cys-455, Cys-446–Cys-452, Cys-451–Cys-477, Cys-464–Cys-484, Cys-471–Cys-503, Cys-496–Cys-508, Cys-515–Cys-565, Cys-530–Cys-575, Cys-543–Cys-553, Cys-560–Cys-601, and Cys-595–Cys-607. A D/ECD-tripeptide motif is present at residues 470 to 472; the sequence is ECD. The Ca(2+) site is built by Asp-472, Glu-475, and Asp-487. A glycan (N-linked (GlcNAc...) asparagine) is linked at Asn-534.

This sequence belongs to the venom metalloproteinase (M12B) family. P-III subfamily. P-IIIa sub-subfamily. Monomer. It depends on Zn(2+) as a cofactor. In terms of processing, N-glycosylated. The N-terminus is blocked. As to expression, expressed by the venom gland (at protein level). Expressed by the venom gland.

It localises to the secreted. The alpha-fibrinogenase activity is inhibited by EDTA, but not by pefabloc. Its function is as follows. Zinc metalloprotease that has fibrinogenolytic activity. Does not have hemorrhagic activity in rats. Cleaves insulin B chain at '38-Ala-|-Leu-39' and '40-Tyr-|-Leu-41' bonds. Hydrolyzes only partially and weakly isolated extracellular matrix (ECM) bovine fibronectin and basal membrane (BM) protein human collagen IV in vitro. Murine laminin is not hydrolyzed, neither isolated nor in a solubilized BM preparation. Nidogen is hydrolyzed at '350-Ser-|-Phe-351' bond in a solubilized BM preparation. Hydrolyzes plasma proteins involved in blood coagulation in vitro. Has alpha-fibrinogenase activity cleaving human fibrinogen alpha chain at '432-Lys-|-Leu-433' bond, but does not cleave beta or gamma chains. Does not cleave fibrin. Hydrolyzes only partially bovine prothrombin at '200-Ser-|-Gly-201' bond, factor X (FX) heavy chain, and very slowly, FX light chain and plasminogen in vitro, without activating any of them. Has no effect in plasma thrombin generation. Does not inhibit platelet aggregation induced by collagen in vitro. May have a delayed pathological action as an anticoagulant in envenomed patients after they received serotherapy as it is not recognized by the venom antiserum. The protein is Zinc metalloproteinase-disintegrin-like protein F1 of Vipera ammodytes ammodytes (Western sand viper).